We begin with the raw amino-acid sequence, 356 residues long: Cyanide hydratase (356 aa).

In terms of domain architecture, CN hydrolase spans 15-290 (FKVAAVQAEP…EVVLYANISL (276 aa)). Residue Glu-55 is the Proton acceptor of the active site. Lys-137 is an active-site residue. Cys-172 (nucleophile) is an active-site residue. Positions 331 to 356 (DEQAASKAQQAEIDNAGKGSIVPSKL) are disordered.

It belongs to the carbon-nitrogen hydrolase superfamily. Nitrilase family.

The enzyme catalyses formamide = hydrogen cyanide + H2O. Functionally, catalyzes the hydration of cyanide to formamide. Degradation of cyanide may be important for plant pathogenic fungi in infection of cyanogenic plants. This chain is Cyanide hydratase, found in Armillaria gallica (Bulbous honey fungus).